A 206-amino-acid chain; its full sequence is Protein GrpE (206 aa).

The protein belongs to the GrpE family. Homodimer.

Its subcellular location is the cytoplasm. Participates actively in the response to hyperosmotic and heat shock by preventing the aggregation of stress-denatured proteins, in association with DnaK and GrpE. It is the nucleotide exchange factor for DnaK and may function as a thermosensor. Unfolded proteins bind initially to DnaJ; upon interaction with the DnaJ-bound protein, DnaK hydrolyzes its bound ATP, resulting in the formation of a stable complex. GrpE releases ADP from DnaK; ATP binding to DnaK triggers the release of the substrate protein, thus completing the reaction cycle. Several rounds of ATP-dependent interactions between DnaJ, DnaK and GrpE are required for fully efficient folding. In Shewanella sp. (strain W3-18-1), this protein is Protein GrpE.